Consider the following 155-residue polypeptide: Troponin C, isoform 3 (155 aa).

EF-hand domains lie at E11–P46, F47–E82, A87–Q122, and L123–E155. Ca(2+) is bound by residues D60, D62, S64, R66, and E71. Ca(2+)-binding residues include D136, D138, S140, T142, and E147.

This sequence belongs to the troponin C family. In terms of tissue distribution, present in both larval and adult muscles.

The chain is Troponin C, isoform 3 (TpnC73F) from Drosophila melanogaster (Fruit fly).